Reading from the N-terminus, the 156-residue chain is NAD(P)H-quinone oxidoreductase subunit N (156 aa).

The protein belongs to the complex I NdhN subunit family. In terms of assembly, NDH-1 can be composed of about 15 different subunits; different subcomplexes with different compositions have been identified which probably have different functions.

The protein resides in the cellular thylakoid membrane. It carries out the reaction a plastoquinone + NADH + (n+1) H(+)(in) = a plastoquinol + NAD(+) + n H(+)(out). The enzyme catalyses a plastoquinone + NADPH + (n+1) H(+)(in) = a plastoquinol + NADP(+) + n H(+)(out). NDH-1 shuttles electrons from an unknown electron donor, via FMN and iron-sulfur (Fe-S) centers, to quinones in the respiratory and/or the photosynthetic chain. The immediate electron acceptor for the enzyme in this species is believed to be plastoquinone. Couples the redox reaction to proton translocation, and thus conserves the redox energy in a proton gradient. Cyanobacterial NDH-1 also plays a role in inorganic carbon-concentration. The protein is NAD(P)H-quinone oxidoreductase subunit N of Prochlorococcus marinus subsp. pastoris (strain CCMP1986 / NIES-2087 / MED4).